The following is a 138-amino-acid chain: Large ribosomal subunit protein uL16 (138 aa).

Residues 1-15 (MLSPKKVKYRKKQRG) show a composition bias toward basic residues. A disordered region spans residues 1 to 21 (MLSPKKVKYRKKQRGRLSGEA).

The protein belongs to the universal ribosomal protein uL16 family. As to quaternary structure, part of the 50S ribosomal subunit.

Its function is as follows. Binds 23S rRNA and is also seen to make contacts with the A and possibly P site tRNAs. This Borreliella afzelii (strain PKo) (Borrelia afzelii) protein is Large ribosomal subunit protein uL16.